A 935-amino-acid polypeptide reads, in one-letter code: Auxin response factor 6 (935 aa).

Residues 129–231 (FCKTLTASDT…QLLLGIRRAN (103 aa)) constitute a DNA-binding region (TF-B3). Disordered regions lie at residues 536 to 624 (QAYL…PLHT) and 645 to 714 (SAMT…SASD). Low complexity-rich tracts occupy residues 546–565 (QPQSQAQSQSNNHLSQQQQQ) and 573–582 (SASSAAVVSA). Polar residues-rich tracts occupy residues 583-624 (MSQF…PLHT) and 661-689 (SSFQHSGAGNNNTQSVLEQLGQSHTSNVP). Residues 796–880 (NTFVKVYKSG…WCIKILSPQE (85 aa)) form the PB1 domain. The segment covering 896-909 (PSSNNVDKLPSNGN) has biased composition (polar residues). The disordered stretch occupies residues 896 to 917 (PSSNNVDKLPSNGNCDDFGNRS).

The protein belongs to the ARF family. In terms of assembly, homodimers and heterodimers. In terms of tissue distribution, expressed in the whole plant.

Its subcellular location is the nucleus. In terms of biological role, auxin response factors (ARFs) are transcriptional factors that bind specifically to the DNA sequence 5'-TGTCTC-3' found in the auxin-responsive promoter elements (AuxREs). Seems to act as transcriptional activator. Formation of heterodimers with Aux/IAA proteins may alter their ability to modulate early auxin response genes expression. Regulates both stamen and gynoecium maturation. Promotes jasmonic acid production. Partially redundant with ARF8. The protein is Auxin response factor 6 (ARF6) of Arabidopsis thaliana (Mouse-ear cress).